We begin with the raw amino-acid sequence, 467 residues long: ADAM DEC1 (467 aa).

An N-terminal signal peptide occupies residues 1–33 (MLPGTSRLPTEASMSWVLLSVLWLIIQIQVIDA). Positions 34–208 (TLTPELKPHE…LRTSRSLKNP (175 aa)) are excised as a propeptide. N-linked (GlcNAc...) asparagine glycosylation is found at asparagine 61 and asparagine 236. A Peptidase M12B domain is found at 217 to 411 (KYIGLFLVLD…RNARCLLLAP (195 aa)). 2 disulfide bridges follow: cysteine 327/cysteine 406 and cysteine 368/cysteine 373. A Zn(2+)-binding site is contributed by histidine 351. Glutamate 352 is an active-site residue. The Zn(2+) site is built by histidine 355 and aspartate 361. The 50-residue stretch at 418 to 467 (KPTCGNQVLDVGEECDCGSPEECTNLCCEPLTCRLKSQPDCSEASNHITE) folds into the Disintegrin domain.

Requires Zn(2+) as cofactor. As to expression, expressed highly in uterus during pregnancy.

It localises to the secreted. In terms of biological role, may play an important role in the control of the immune response and during pregnancy. This is ADAM DEC1 (Adamdec1) from Mus musculus (Mouse).